A 373-amino-acid polypeptide reads, in one-letter code: Chaperone protein DnaJ (373 aa).

The J domain maps to 4–68 (NYYQILGVSK…QTRAAYDRLG (65 aa)). The CR-type zinc finger occupies 136–214 (GIEKNISFSS…CHGMGRYHKQ (79 aa)). The Zn(2+) site is built by cysteine 149, cysteine 152, cysteine 166, cysteine 169, cysteine 188, cysteine 191, cysteine 202, and cysteine 205. CXXCXGXG motif repeat units follow at residues 149–156 (CDTCHGSG), 166–173 (CDACSGVG), 188–195 (CHKCQGNG), and 202–209 (CKKCHGMG).

It belongs to the DnaJ family. As to quaternary structure, homodimer. Zn(2+) serves as cofactor.

It localises to the cytoplasm. Functionally, participates actively in the response to hyperosmotic and heat shock by preventing the aggregation of stress-denatured proteins and by disaggregating proteins, also in an autonomous, DnaK-independent fashion. Unfolded proteins bind initially to DnaJ; upon interaction with the DnaJ-bound protein, DnaK hydrolyzes its bound ATP, resulting in the formation of a stable complex. GrpE releases ADP from DnaK; ATP binding to DnaK triggers the release of the substrate protein, thus completing the reaction cycle. Several rounds of ATP-dependent interactions between DnaJ, DnaK and GrpE are required for fully efficient folding. Also involved, together with DnaK and GrpE, in the DNA replication of plasmids through activation of initiation proteins. The protein is Chaperone protein DnaJ of Rickettsia peacockii (strain Rustic).